A 179-amino-acid chain; its full sequence is ADP-ribosylation factor-like protein 5B (179 aa).

Glycine 2 carries N-myristoyl glycine lipidation. GTP is bound by residues 23–30 (GLDNAGKT), 66–70 (DIGGQ), 125–128 (NKQD), and alanine 159.

It belongs to the small GTPase superfamily. Arf family.

Functionally, binds and exchanges GTP and GDP. In Mus musculus (Mouse), this protein is ADP-ribosylation factor-like protein 5B (Arl5b).